The following is a 300-amino-acid chain: MSIKIELFGITFENPLILASGVVDMTPELLRRAHKEGAGGVVTKSIGIEPRKGYDNPTVVEVPCGLINAMGLPNPGWKAFLEEFEKESFDFPVIVSIFGGNPEEFAFLAEKLERVGDAFELNLSCPHAKGYGLEIGQDPENVYRVVKAVKDVTDKPVIAKLTPNTSDITKLGLAAEKAEADGVSAINTLKAIAIDIYAKRPILSNKFGGYSGPGIKPIALRAVYDLASKLDIPIIGIGGITTWQDAVEFLLAGASAVQIGTAVYLKGFSVFREIAEGIRKYLEEEGFSSVKEIIGLAQKV.

FMN-binding positions include Ser20 and 44-45; that span reads KS. Substrate-binding positions include Lys44, 68–72, and Asn122; that span reads NAMGL. Position 122 (Asn122) interacts with FMN. Catalysis depends on Cys125, which acts as the Nucleophile. Residues Lys160 and Ile186 each coordinate FMN. 187 to 188 is a substrate binding site; that stretch reads NT. Residues Gly212, 238 to 239, and 260 to 261 contribute to the FMN site; these read GG and GT.

It belongs to the dihydroorotate dehydrogenase family. Type 1 subfamily. In terms of assembly, heterotetramer of 2 PyrK and 2 PyrD type B subunits. The cofactor is FMN.

The protein localises to the cytoplasm. It carries out the reaction (S)-dihydroorotate + NAD(+) = orotate + NADH + H(+). It participates in pyrimidine metabolism; UMP biosynthesis via de novo pathway; orotate from (S)-dihydroorotate (NAD(+) route): step 1/1. Its function is as follows. Catalyzes the conversion of dihydroorotate to orotate with NAD(+) as electron acceptor. This is Dihydroorotate dehydrogenase B (NAD(+)), catalytic subunit (pyrD) from Pyrococcus furiosus (strain ATCC 43587 / DSM 3638 / JCM 8422 / Vc1).